A 273-amino-acid chain; its full sequence is Mitochondrial distribution and morphology protein 12 (273 aa).

Residues 1–273 (MSIDFDWSKL…LVWPSYITIE (273 aa)) enclose the SMP-LTD domain. A disordered region spans residues 124–145 (LTSPIPESRPSTPMDNHQERDR).

The protein belongs to the MDM12 family. Component of the ER-mitochondria encounter structure (ERMES) or MDM complex, composed of mmm1, mdm10, mdm12 and mdm34. A mmm1 homodimer associates with one molecule of mdm12 on each side in a pairwise head-to-tail manner, and the SMP-LTD domains of mmm1 and mdm12 generate a continuous hydrophobic tunnel for phospholipid trafficking.

It is found in the mitochondrion outer membrane. The protein resides in the endoplasmic reticulum membrane. Functionally, component of the ERMES/MDM complex, which serves as a molecular tether to connect the endoplasmic reticulum (ER) and mitochondria. Components of this complex are involved in the control of mitochondrial shape and protein biogenesis, and function in nonvesicular lipid trafficking between the ER and mitochondria. Mdm12 is required for the interaction of the ER-resident membrane protein mmm1 and the outer mitochondrial membrane-resident beta-barrel protein mdm10. The mdm12-mmm1 subcomplex functions in the major beta-barrel assembly pathway that is responsible for biogenesis of all mitochondrial outer membrane beta-barrel proteins, and acts in a late step after the SAM complex. The mdm10-mdm12-mmm1 subcomplex further acts in the TOM40-specific pathway after the action of the mdm12-mmm1 complex. Essential for establishing and maintaining the structure of mitochondria and maintenance of mtDNA nucleoids. The chain is Mitochondrial distribution and morphology protein 12 from Schizosaccharomyces pombe (strain 972 / ATCC 24843) (Fission yeast).